Consider the following 507-residue polypeptide: Cobyric acid synthase (507 aa).

The GATase cobBQ-type domain maps to aspartate 251 to phenylalanine 448. The active-site Nucleophile is the cysteine 332. Histidine 440 is an active-site residue.

Belongs to the CobB/CobQ family. CobQ subfamily.

Its pathway is cofactor biosynthesis; adenosylcobalamin biosynthesis. In terms of biological role, catalyzes amidations at positions B, D, E, and G on adenosylcobyrinic A,C-diamide. NH(2) groups are provided by glutamine, and one molecule of ATP is hydrogenolyzed for each amidation. This chain is Cobyric acid synthase, found in Klebsiella pneumoniae (strain 342).